The following is a 373-amino-acid chain: 3 beta-hydroxysteroid dehydrogenase/Delta 5--&gt;4-isomerase (373 aa).

The active-site Proton acceptor is Tyr-155. Lys-159 serves as a coordination point for NAD(+). The helical transmembrane segment at Ile-288–Ile-308 threads the bilayer.

This sequence belongs to the 3-beta-HSD family.

It localises to the endoplasmic reticulum membrane. It is found in the mitochondrion membrane. The enzyme catalyses a 3beta-hydroxy-Delta(5)-steroid + NAD(+) = a 3-oxo-Delta(5)-steroid + NADH + H(+). It carries out the reaction a 3-oxo-Delta(5)-steroid = a 3-oxo-Delta(4)-steroid. It participates in lipid metabolism; steroid biosynthesis. Its function is as follows. 3-beta-HSD is a bifunctional enzyme, that catalyzes the oxidative conversion of Delta(5)-ene-3-beta-hydroxy steroid, and the oxidative conversion of ketosteroids. The 3-beta-HSD enzymatic system plays a crucial role in the biosynthesis of all classes of hormonal steroids. In Canis lupus familiaris (Dog), this protein is 3 beta-hydroxysteroid dehydrogenase/Delta 5--&gt;4-isomerase (HSD3B).